The primary structure comprises 728 residues: Catalase-peroxidase 1 (728 aa).

The tryptophyl-tyrosyl-methioninium (Trp-Tyr) (with M-244) cross-link spans 91–218 (WHSAGTYRTA…LAAVQMGLIY (128 aa)). His92 functions as the Proton acceptor in the catalytic mechanism. The segment at residues 218-244 (YVNPEGPDGNPDPVAAAHDIRETFARM) is a cross-link (tryptophyl-tyrosyl-methioninium (Tyr-Met) (with W-91)). His259 contacts heme b.

It belongs to the peroxidase family. Peroxidase/catalase subfamily. As to quaternary structure, homodimer or homotetramer. It depends on heme b as a cofactor. Formation of the three residue Trp-Tyr-Met cross-link is important for the catalase, but not the peroxidase activity of the enzyme.

It catalyses the reaction H2O2 + AH2 = A + 2 H2O. It carries out the reaction 2 H2O2 = O2 + 2 H2O. In terms of biological role, bifunctional enzyme with both catalase and broad-spectrum peroxidase activity. The protein is Catalase-peroxidase 1 of Burkholderia orbicola (strain MC0-3).